The chain runs to 1269 residues: Clustered mitochondria protein homolog (1269 aa).

One can recognise a Clu domain in the interval 297-552; it reads PSNNGDFMRT…NTNPVDIEFV (256 aa). Residues 958-969 are compositionally biased toward basic and acidic residues; it reads EKKKEESKKAAA. Residues 958–989 are disordered; it reads EKKKEESKKAAADGEDAGSSGATSKEEEQAKE. 2 TPR repeats span residues 1020 to 1053 and 1147 to 1180; these read VSSY…SERC and GQNE…FSKE. The interval 1211 to 1269 is disordered; sequence LASAQQATKPANISQKKGKKSSSSSPALTNKSVDELLQFIEGPGASKSSKKSKKKHTKN. The span at 1213-1223 shows a compositional bias: polar residues; sequence SAQQATKPANI. The segment covering 1258–1269 has biased composition (basic residues); sequence SSKKSKKKHTKN.

The protein belongs to the CLU family. May associate with the eukaryotic translation initiation factor 3 (eIF-3) complex.

The protein resides in the cytoplasm. Functionally, mRNA-binding protein involved in proper cytoplasmic distribution of mitochondria. The protein is Clustered mitochondria protein homolog of Kluyveromyces lactis (strain ATCC 8585 / CBS 2359 / DSM 70799 / NBRC 1267 / NRRL Y-1140 / WM37) (Yeast).